We begin with the raw amino-acid sequence, 416 residues long: Probable pectate lyase 8 (416 aa).

An N-terminal signal peptide occupies residues 1–24 (MAVTKLILFASALLLTALFIGVNA). N-linked (GlcNAc...) asparagine glycosylation is found at Asn-23, Asn-28, and Asn-52. Ca(2+)-binding residues include Asp-214, Asp-238, and Asp-242. Residue Arg-294 is part of the active site.

It belongs to the polysaccharide lyase 1 family. Ca(2+) is required as a cofactor.

The catalysed reaction is Eliminative cleavage of (1-&gt;4)-alpha-D-galacturonan to give oligosaccharides with 4-deoxy-alpha-D-galact-4-enuronosyl groups at their non-reducing ends.. Its pathway is glycan metabolism; pectin degradation; 2-dehydro-3-deoxy-D-gluconate from pectin: step 2/5. In Arabidopsis thaliana (Mouse-ear cress), this protein is Probable pectate lyase 8.